A 425-amino-acid chain; its full sequence is Riboflavin biosynthesis protein RibBA (425 aa).

Residues 1–204 (MTRLDSVERA…IADLIEWRRK (204 aa)) are DHBP synthase. D-ribulose 5-phosphate-binding positions include 28–29 (RE), Asp33, 141–145 (RPGHT), and Glu165. Glu29 lines the Mg(2+) pocket. His144 contributes to the Mg(2+) binding site. Residues 205 to 425 (HEKHIERIAE…HLPGEFGGAL (221 aa)) form a GTP cyclohydrolase II region. 259 to 263 (RVHSE) contacts GTP. Zn(2+)-binding residues include Cys264, Cys275, and Cys277. GTP contacts are provided by residues Gln280, 303–305 (EGR), and Thr325. The active-site Proton acceptor; for GTP cyclohydrolase activity is Asp337. The active-site Nucleophile; for GTP cyclohydrolase activity is Arg339. Residues Thr360 and Lys365 each coordinate GTP.

It in the N-terminal section; belongs to the DHBP synthase family. The protein in the C-terminal section; belongs to the GTP cyclohydrolase II family. The cofactor is Mg(2+). Mn(2+) serves as cofactor. It depends on Zn(2+) as a cofactor.

It carries out the reaction D-ribulose 5-phosphate = (2S)-2-hydroxy-3-oxobutyl phosphate + formate + H(+). The catalysed reaction is GTP + 4 H2O = 2,5-diamino-6-hydroxy-4-(5-phosphoribosylamino)-pyrimidine + formate + 2 phosphate + 3 H(+). It participates in cofactor biosynthesis; riboflavin biosynthesis; 2-hydroxy-3-oxobutyl phosphate from D-ribulose 5-phosphate: step 1/1. Its pathway is cofactor biosynthesis; riboflavin biosynthesis; 5-amino-6-(D-ribitylamino)uracil from GTP: step 1/4. Functionally, catalyzes the conversion of D-ribulose 5-phosphate to formate and 3,4-dihydroxy-2-butanone 4-phosphate. In terms of biological role, catalyzes the conversion of GTP to 2,5-diamino-6-ribosylamino-4(3H)-pyrimidinone 5'-phosphate (DARP), formate and pyrophosphate. The chain is Riboflavin biosynthesis protein RibBA from Mycolicibacterium paratuberculosis (strain ATCC BAA-968 / K-10) (Mycobacterium paratuberculosis).